A 290-amino-acid chain; its full sequence is Nucleoid occlusion protein (290 aa).

Positions 153–172 form a DNA-binding region, H-T-H motif; that stretch reads EALAQRLGKGQSTIANKLRL.

This sequence belongs to the ParB family.

It localises to the cytoplasm. The protein localises to the nucleoid. Effects nucleoid occlusion by binding relatively nonspecifically to DNA and preventing the assembly of the division machinery in the vicinity of the nucleoid, especially under conditions that disturb the cell cycle. It helps to coordinate cell division and chromosome segregation by preventing the formation of the Z ring through the nucleoid, which would cause chromosome breakage. In Bacillus cereus (strain AH187), this protein is Nucleoid occlusion protein.